Reading from the N-terminus, the 216-residue chain is Probable transaldolase (216 aa).

K83 (schiff-base intermediate with substrate) is an active-site residue.

The protein belongs to the transaldolase family. Type 3B subfamily.

Its subcellular location is the cytoplasm. The catalysed reaction is D-sedoheptulose 7-phosphate + D-glyceraldehyde 3-phosphate = D-erythrose 4-phosphate + beta-D-fructose 6-phosphate. It participates in carbohydrate degradation; pentose phosphate pathway; D-glyceraldehyde 3-phosphate and beta-D-fructose 6-phosphate from D-ribose 5-phosphate and D-xylulose 5-phosphate (non-oxidative stage): step 2/3. In terms of biological role, transaldolase is important for the balance of metabolites in the pentose-phosphate pathway. In Thermosipho africanus (strain TCF52B), this protein is Probable transaldolase.